The sequence spans 398 residues: Odorant receptor 24a (398 aa).

The Cytoplasmic portion of the chain corresponds to 1–14 (MLPRFLTASYPMER). The chain crosses the membrane as a helical span at residues 15–31 (HYFMVPKFALSLIGFYP). Residues 32–46 (EQKRTVLVKLWSFFN) lie on the Extracellular side of the membrane. Residues 47–67 (FFILTYGCYAEAYYGIHYIPI) form a helical membrane-spanning segment. Topologically, residues 68–74 (NIATALD) are cytoplasmic. Residues 75–95 (ALCPVASSILSLVKMVAIWWY) traverse the membrane as a helical segment. Topologically, residues 96-124 (QDELRSLIERVRFLTEQQKSKRKLGYKKR) are extracellular. A helical transmembrane segment spans residues 125–145 (FYTLATQLTFLLLCCGFCTST). The Cytoplasmic portion of the chain corresponds to 146 to 199 (SYSVRHLIDNILRRTHGKDWIYETPFKMMFPDLLLRLPLYPITYILVHWHGYIT). A helical transmembrane segment spans residues 200–220 (VVCFVGADGFFLGFCLYFTVL). Topologically, residues 221–269 (LLCLQDDVCDLLEVENIEKSPSEAEEARIVREMEKLVDRHNEVAELTER) are extracellular. The helical transmembrane segment at 270–290 (LSGVMVEITLAHFVTSSLIIG) threads the bilayer. Residues 291 to 295 (TSVVD) are Cytoplasmic-facing. The helical transmembrane segment at 296 to 316 (ILLFSGLGIIVYVVYTCAVGV) threads the bilayer. The Extracellular segment spans residues 317 to 398 (EIFLYCLGGS…SLIALAKSVI (82 aa)).

This sequence belongs to the insect chemoreceptor superfamily. Heteromeric odorant receptor channel (TC 1.A.69) family. Or1a subfamily. Interacts with Orco. Complexes exist early in the endomembrane system in olfactory sensory neurons (OSNs), coupling these complexes to the conserved ciliary trafficking pathway. As to expression, not expressed in either the antenna or maxillary palp.

It is found in the cell membrane. Odorant receptor which mediates acceptance or avoidance behavior, depending on its substrates. The odorant receptor repertoire encodes a large collection of odor stimuli that vary widely in identity, intensity, and duration. May form a complex with Orco to form odorant-sensing units, providing sensitive and prolonged odorant signaling and calcium permeability. Involved in the behavioral responses to pentanol, hexanol, octanol, nonanol, propyl acetate, butyl acetate, isoamyl acetate, methyl caproate, anisole, heptanal, 2-heptanone, r-carvone, and nonanoic acid. Also responds to pyrazines. This is Odorant receptor 24a (Or24a) from Drosophila melanogaster (Fruit fly).